The following is a 274-amino-acid chain: Sulfur carrier protein FdhD (274 aa).

Catalysis depends on cysteine 120, which acts as the Cysteine persulfide intermediate.

Belongs to the FdhD family.

It localises to the cytoplasm. Functionally, required for formate dehydrogenase (FDH) activity. Acts as a sulfur carrier protein that transfers sulfur from IscS to the molybdenum cofactor prior to its insertion into FDH. This is Sulfur carrier protein FdhD from Burkholderia mallei (strain ATCC 23344).